The following is a 504-amino-acid chain: Sodium-coupled neutral amino acid symporter 2 (504 aa).

A disordered region spans residues 1–22 (MKKTEMGRFNISPDEDSSSYSS). The Cytoplasmic segment spans residues 1–76 (MKKTEMGRFN…HPGTTSFGMS (76 aa)). Residues 1-96 (MKKTEMGRFN…SGILGLSYAM (96 aa)) are regulates protein turnover upon amino acid deprivation. Ser-12, Ser-21, Ser-22, and Ser-55 each carry phosphoserine. The helical transmembrane segment at 77–96 (VFNLSNAIVGSGILGLSYAM) threads the bilayer. Asn-82 lines the Na(+) pocket. Residues 97-102 (ANTGIA) are Extracellular-facing. A helical membrane pass occupies residues 103-123 (LFIILLTFVSIFSLYSVHLLL). Over 124–158 (KTANEGGSLLYEQLGHKAYGLAGKLAASGSITMQN) the chain is Cytoplasmic. Residues 159-177 (IGAMSSYLFIVKYELPLVI) form a helical membrane-spanning segment. Over 178–188 (KALMNIEDTNG) the chain is Extracellular. The helical transmembrane segment at 189–209 (LWYLNGDYLVLLVSFVLILPL) threads the bilayer. At 210 to 217 (SLLRNLGY) the chain is on the cytoplasmic side. A helical membrane pass occupies residues 218 to 238 (LGYTSGLSLLCMIFFLIVVIC). Topologically, residues 239–290 (KKFQIPCPVEVALMANETVNGTFTQVALAALASNSTAADTCRPRYFIFNSQT) are extracellular. Cys-245 and Cys-279 are disulfide-bonded. N-linked (GlcNAc...) asparagine glycans are attached at residues Asn-254, Asn-258, and Asn-272. The chain crosses the membrane as a helical span at residues 291 to 311 (VYAVPILTFSFVCHPAVLPIY). Over 312-327 (EELKSRSRRRMMNVSK) the chain is Cytoplasmic. Residues 328-348 (ISFFAMFLMYLLAALFGYLTF) form a helical membrane-spanning segment. Residues 349 to 369 (YEHVESELLHTYSAIVGTDIL) lie on the Extracellular side of the membrane. The chain crosses the membrane as a helical span at residues 370-390 (LLVVRLAVLVAVTLTVPVVIF). Thr-384 contacts Na(+). Residues 391-411 (PIRSSVTHLLCPTKEFSWFRH) lie on the Cytoplasmic side of the membrane. A helical membrane pass occupies residues 412–432 (SVITVTILAFTNLLVIFVPTI). Residues 433-434 (RD) are Extracellular-facing. A helical transmembrane segment spans residues 435–455 (IFGFIGASAAAMLIFILPSAF). At 456 to 470 (YIKLVKKEPMRSVQK) the chain is on the cytoplasmic side. Residues 471-493 (IGALCFLLSGVVVMIGSMGLIVL) traverse the membrane as a helical segment. Topologically, residues 494 to 504 (DWVHDASAGGH) are extracellular.

The protein belongs to the amino acid/polyamine transporter 2 family. Polyubiquitination by NEDD4L regulates the degradation and the activity of SLC38A2. Widely expressed. Expressed in skeletal muscle and adipose tissue (at protein level). Expressed by glutamatergic and GABAergic neurons together with astrocytes and other non-neuronal cells in the cerebral cortex (at protein level). Widely expressed in the central nervous systeme where, it is enriched in the spinal cord and the brainstem nuclei, especially those of the auditory system.

It localises to the cell membrane. It carries out the reaction L-alanine(in) + Na(+)(in) = L-alanine(out) + Na(+)(out). The catalysed reaction is glycine(in) + Na(+)(in) = glycine(out) + Na(+)(out). The enzyme catalyses L-serine(in) + Na(+)(in) = L-serine(out) + Na(+)(out). It catalyses the reaction L-proline(in) + Na(+)(in) = L-proline(out) + Na(+)(out). It carries out the reaction L-methionine(in) + Na(+)(in) = L-methionine(out) + Na(+)(out). The catalysed reaction is L-histidine(in) + Na(+)(in) = L-histidine(out) + Na(+)(out). The enzyme catalyses L-asparagine(in) + Na(+)(in) = L-asparagine(out) + Na(+)(out). It catalyses the reaction L-glutamine(in) + Na(+)(in) = L-glutamine(out) + Na(+)(out). It carries out the reaction L-threonine(in) + Na(+)(in) = L-threonine(out) + Na(+)(out). The catalysed reaction is L-leucine(in) + Na(+)(in) = L-leucine(out) + Na(+)(out). The enzyme catalyses L-phenylalanine(in) + Na(+)(in) = L-phenylalanine(out) + Na(+)(out). Inhibited by N-methyl-D-glucamine. Inhibited by choline. Allosteric regulation of sodium ions binding by pH. Symporter that cotransports neutral amino acids and sodium ions from the extracellular to the intracellular side of the cell membrane. The transport is pH-sensitive, Li(+)-intolerant, electrogenic, driven by the Na(+) electrochemical gradient and cotransports of neutral amino acids and sodium ions with a stoichiometry of 1:1. May function in the transport of amino acids at the blood-brain barrier. May function in the transport of amino acids in the supply of maternal nutrients to the fetus through the placenta. Maintains a key metabolic glutamine/glutamate balance underpinning retrograde signaling by dendritic release of the neurotransmitter glutamate. Transports L-proline in differentiating osteoblasts for the efficient synthesis of proline-enriched proteins and provides proline essential for osteoblast differentiation and bone formation during bone development. This Rattus norvegicus (Rat) protein is Sodium-coupled neutral amino acid symporter 2.